We begin with the raw amino-acid sequence, 601 residues long: Elongation factor 4 (601 aa).

Residues 8-189 (EQIRNFGIIA…LIVRKAPPPK (182 aa)) form the tr-type G domain. GTP is bound at residue 20-25 (DHGKST).

It belongs to the TRAFAC class translation factor GTPase superfamily. Classic translation factor GTPase family. LepA subfamily.

The protein localises to the cell membrane. It catalyses the reaction GTP + H2O = GDP + phosphate + H(+). Functionally, required for accurate and efficient protein synthesis under certain stress conditions. May act as a fidelity factor of the translation reaction, by catalyzing a one-codon backward translocation of tRNAs on improperly translocated ribosomes. Back-translocation proceeds from a post-translocation (POST) complex to a pre-translocation (PRE) complex, thus giving elongation factor G a second chance to translocate the tRNAs correctly. Binds to ribosomes in a GTP-dependent manner. This Tropheryma whipplei (strain TW08/27) (Whipple's bacillus) protein is Elongation factor 4.